Consider the following 316-residue polypeptide: Probable protein-L-isoaspartate O-methyltransferase (316 aa).

S-adenosyl-L-homocysteine is bound by residues 103–106 (ATIS), H111, S136, 157–158 (EH), 187–188 (DG), T263, and Q268. Residue S106 is part of the active site.

The protein belongs to the methyltransferase superfamily. L-isoaspartyl/D-aspartyl protein methyltransferase family.

The protein localises to the cytoplasm. It localises to the cytosol. It catalyses the reaction [protein]-L-isoaspartate + S-adenosyl-L-methionine = [protein]-L-isoaspartate alpha-methyl ester + S-adenosyl-L-homocysteine. Initiates the repair of damaged proteins by catalyzing methyl esterification of L-isoaspartyl and D-aspartyl residues produced by spontaneous isomerization and racemization of L-aspartyl and L-asparaginyl residues in aging peptides and proteins. The protein is Probable protein-L-isoaspartate O-methyltransferase (pcmA) of Dictyostelium discoideum (Social amoeba).